We begin with the raw amino-acid sequence, 835 residues long: Protein bicaudal D homolog 1 (835 aa).

Positions 1-264 (MAAEEALKTV…YINLSDSHIS (264 aa)) form a coiled coil. The disordered stretch occupies residues 278–297 (EPNNDDKMNGHIHGPLGKLN). A coiled-coil region spans residues 320–519 (ELNISEIQKL…TFSEELAQLY (200 aa)). Disordered regions lie at residues 545 to 616 (RSGS…LDTS) and 800 to 835 (DHEQSRRSKGKLGKSKIGSPKIVSSLLPPYRHSAHN). Over residues 557–572 (GLLSPRLSRRGVSSPV) the composition is skewed to low complexity. Residues 581 to 590 (VSKENTETSK) are compositionally biased toward basic and acidic residues. Residues 591 to 604 (EPSPTKTPTISPVI) show a composition bias toward low complexity. The stretch at 663 to 803 (IDKDKEALME…LEDLEFDHEQ (141 aa)) forms a coiled coil. The interaction with RAB6A stretch occupies residues 663-803 (IDKDKEALME…LEDLEFDHEQ (141 aa)).

It belongs to the BicD family. Interacts with RAB6A. Interacts (via C-terminus) with RAB6B (GTP-bound); the interaction is direct. Interacts with CLIP-115 and KIFC2. In terms of tissue distribution, expressed in the brain, heart and skeletal muscle.

It localises to the golgi apparatus. Its function is as follows. Regulates coat complex coatomer protein I (COPI)-independent Golgi-endoplasmic reticulum transport by recruiting the dynein-dynactin motor complex. The polypeptide is Protein bicaudal D homolog 1 (Bicd1) (Mus musculus (Mouse)).